Here is a 67-residue protein sequence, read N- to C-terminus: UPF0253 protein VS_2370 (67 aa).

This sequence belongs to the UPF0253 family.

In Vibrio atlanticus (strain LGP32) (Vibrio splendidus (strain Mel32)), this protein is UPF0253 protein VS_2370.